The following is a 105-amino-acid chain: Small ribosomal subunit protein bS20 (105 aa).

This sequence belongs to the bacterial ribosomal protein bS20 family.

Functionally, binds directly to 16S ribosomal RNA. This Moorella thermoacetica (strain ATCC 39073 / JCM 9320) protein is Small ribosomal subunit protein bS20.